A 301-amino-acid chain; its full sequence is Pyridoxal 5'-phosphate synthase subunit PdxS (301 aa).

D31 serves as a coordination point for D-ribose 5-phosphate. K88 (schiff-base intermediate with D-ribose 5-phosphate) is an active-site residue. G160 provides a ligand contact to D-ribose 5-phosphate. Position 172 (R172) interacts with D-glyceraldehyde 3-phosphate. D-ribose 5-phosphate is bound by residues G221 and 242-243 (GS). A disordered region spans residues 273–301 (EIAKSPGKGMKGQANETLPEEEKLQDRGI). Residues 292–301 (EEEKLQDRGI) show a composition bias toward basic and acidic residues.

The protein belongs to the PdxS/SNZ family. As to quaternary structure, in the presence of PdxT, forms a dodecamer of heterodimers.

It catalyses the reaction aldehydo-D-ribose 5-phosphate + D-glyceraldehyde 3-phosphate + L-glutamine = pyridoxal 5'-phosphate + L-glutamate + phosphate + 3 H2O + H(+). The protein operates within cofactor biosynthesis; pyridoxal 5'-phosphate biosynthesis. Catalyzes the formation of pyridoxal 5'-phosphate from ribose 5-phosphate (RBP), glyceraldehyde 3-phosphate (G3P) and ammonia. The ammonia is provided by the PdxT subunit. Can also use ribulose 5-phosphate and dihydroxyacetone phosphate as substrates, resulting from enzyme-catalyzed isomerization of RBP and G3P, respectively. The chain is Pyridoxal 5'-phosphate synthase subunit PdxS from Natronomonas pharaonis (strain ATCC 35678 / DSM 2160 / CIP 103997 / JCM 8858 / NBRC 14720 / NCIMB 2260 / Gabara) (Halobacterium pharaonis).